The following is a 1023-amino-acid chain: Lon protease homolog (1023 aa).

Gly-515–Thr-522 lines the ATP pocket. The Lon proteolytic domain occupies Thr-810–Ile-1003. Residue Ser-906 is part of the active site.

It belongs to the peptidase S16 family.

The sequence is that of Lon protease homolog from Acanthamoeba polyphaga (Amoeba).